The following is a 514-amino-acid chain: 3-octaprenyl-4-hydroxybenzoate carboxy-lyase (514 aa).

A Mn(2+)-binding site is contributed by Asn-177. Prenylated FMN contacts are provided by residues 180–182 (IYR), 194–196 (RWL), and 199–200 (RG). Glu-243 is a Mn(2+) binding site. Asp-314 serves as the catalytic Proton donor.

The protein belongs to the UbiD family. Homohexamer. Prenylated FMN is required as a cofactor. Requires Mn(2+) as cofactor.

It is found in the cell membrane. It carries out the reaction a 4-hydroxy-3-(all-trans-polyprenyl)benzoate + H(+) = a 2-(all-trans-polyprenyl)phenol + CO2. It participates in cofactor biosynthesis; ubiquinone biosynthesis. In terms of biological role, catalyzes the decarboxylation of 3-octaprenyl-4-hydroxy benzoate to 2-octaprenylphenol, an intermediate step in ubiquinone biosynthesis. This Bordetella bronchiseptica (strain ATCC BAA-588 / NCTC 13252 / RB50) (Alcaligenes bronchisepticus) protein is 3-octaprenyl-4-hydroxybenzoate carboxy-lyase.